A 466-amino-acid polypeptide reads, in one-letter code: Uronate isomerase (466 aa).

It belongs to the metallo-dependent hydrolases superfamily. Uronate isomerase family.

It catalyses the reaction D-glucuronate = D-fructuronate. The catalysed reaction is aldehydo-D-galacturonate = keto-D-tagaturonate. It participates in carbohydrate metabolism; pentose and glucuronate interconversion. This Streptococcus agalactiae serotype III (strain NEM316) protein is Uronate isomerase.